Reading from the N-terminus, the 524-residue chain is NAD(P)H-quinone oxidoreductase chain 4, chloroplastic (524 aa).

A run of 14 helical transmembrane segments spans residues 4 to 24 (YPWLTIITLFPISAGLLIPLI), 31 to 51 (LIRWYALGICLIDFLLMTYVF), 87 to 107 (IALVLLTGFITTLATLAAWPV), 113 to 133 (LFYFLMLAMYSGQLGLFLAQD), 134 to 154 (LLLFFFMWELELIPVYLLLSM), 167 to 187 (FILYTAGGSIFLLAAILTISL), 211 to 231 (ILVYLGFLIAYAVKLPVFPFH), 242 to 262 (HYSTCMLLAGILLKMGGYGFI), 275 to 295 (IFAPWLVALGAGQIVYAALVS), 308 to 328 (SSVSHMGFVLIGAGSFSDLGL), 330 to 350 (GAILQMISHGLIGAGLFFLAG), 386 to 406 (LALPGMSGFVAELMIFLGIVA), 417 to 437 (IITCVEGIGIILTPIYLLSMV), and 465 to 485 (VFIILSLLVPMLGIGFYPDLT).

This sequence belongs to the complex I subunit 4 family.

The protein resides in the plastid. Its subcellular location is the chloroplast thylakoid membrane. It catalyses the reaction a plastoquinone + NADH + (n+1) H(+)(in) = a plastoquinol + NAD(+) + n H(+)(out). The enzyme catalyses a plastoquinone + NADPH + (n+1) H(+)(in) = a plastoquinol + NADP(+) + n H(+)(out). The polypeptide is NAD(P)H-quinone oxidoreductase chain 4, chloroplastic (Staurastrum punctulatum (Green alga)).